We begin with the raw amino-acid sequence, 596 residues long: Elongation factor 4 (596 aa).

Residues 2–183 (KNIRNFSIIA…AIITRIPAPN (182 aa)) form the tr-type G domain. GTP-binding positions include 14 to 19 (DHGKST) and 130 to 133 (NKID).

It belongs to the TRAFAC class translation factor GTPase superfamily. Classic translation factor GTPase family. LepA subfamily.

It is found in the cell inner membrane. It catalyses the reaction GTP + H2O = GDP + phosphate + H(+). Functionally, required for accurate and efficient protein synthesis under certain stress conditions. May act as a fidelity factor of the translation reaction, by catalyzing a one-codon backward translocation of tRNAs on improperly translocated ribosomes. Back-translocation proceeds from a post-translocation (POST) complex to a pre-translocation (PRE) complex, thus giving elongation factor G a second chance to translocate the tRNAs correctly. Binds to ribosomes in a GTP-dependent manner. This Campylobacter concisus (strain 13826) protein is Elongation factor 4.